We begin with the raw amino-acid sequence, 1342 residues long: DNA-directed RNA polymerase subunit beta (1342 aa).

It belongs to the RNA polymerase beta chain family. The RNAP catalytic core consists of 2 alpha, 1 beta, 1 beta' and 1 omega subunit. When a sigma factor is associated with the core the holoenzyme is formed, which can initiate transcription.

It catalyses the reaction RNA(n) + a ribonucleoside 5'-triphosphate = RNA(n+1) + diphosphate. Functionally, DNA-dependent RNA polymerase catalyzes the transcription of DNA into RNA using the four ribonucleoside triphosphates as substrates. This Yersinia pseudotuberculosis serotype O:1b (strain IP 31758) protein is DNA-directed RNA polymerase subunit beta.